We begin with the raw amino-acid sequence, 289 residues long: Acetyl-coenzyme A carboxylase carboxyl transferase subunit beta (289 aa).

One can recognise a CoA carboxyltransferase N-terminal domain in the interval 28–289; it reads VMTKCPKCKK…QGGEMAVWQS (262 aa). The Zn(2+) site is built by cysteine 32, cysteine 35, cysteine 51, and cysteine 54. A C4-type zinc finger spans residues 32-54; sequence CPKCKKIMYTKELLKNLKVCVNC.

The protein belongs to the AccD/PCCB family. As to quaternary structure, acetyl-CoA carboxylase is a heterohexamer composed of biotin carboxyl carrier protein (AccB), biotin carboxylase (AccC) and two subunits each of ACCase subunit alpha (AccA) and ACCase subunit beta (AccD). It depends on Zn(2+) as a cofactor.

The protein resides in the cytoplasm. It carries out the reaction N(6)-carboxybiotinyl-L-lysyl-[protein] + acetyl-CoA = N(6)-biotinyl-L-lysyl-[protein] + malonyl-CoA. It participates in lipid metabolism; malonyl-CoA biosynthesis; malonyl-CoA from acetyl-CoA: step 1/1. Component of the acetyl coenzyme A carboxylase (ACC) complex. Biotin carboxylase (BC) catalyzes the carboxylation of biotin on its carrier protein (BCCP) and then the CO(2) group is transferred by the transcarboxylase to acetyl-CoA to form malonyl-CoA. This is Acetyl-coenzyme A carboxylase carboxyl transferase subunit beta from Bacillus cereus (strain ATCC 10987 / NRS 248).